The sequence spans 180 residues: ADP-ribosylation factor 4 (180 aa).

The N-myristoyl glycine moiety is linked to residue glycine 2. GTP contacts are provided by residues 24–31 (GLDAAGKT), 67–71 (DVGGQ), and 126–129 (NKQD). Serine 147 is modified (phosphoserine).

The protein belongs to the small GTPase superfamily. Arf family. In terms of assembly, forms a complex containing RAB11A, ASAP1, RAB3IP, RAP11FIP3 and ARF4; the complex promotes preciliary trafficking; the complex binds to RHO in photoreceptor cells and promotes RHO ciliary transport.

The protein localises to the golgi apparatus. The protein resides in the membrane. In terms of biological role, GTP-binding protein that functions as an allosteric activator of the cholera toxin catalytic subunit, an ADP-ribosyltransferase. Involved in protein trafficking; may modulate vesicle budding and uncoating within the Golgi apparatus. Part of the ciliary targeting complex containing Rab11, ASAP1, Rabin8/RAB3IP, RAB11FIP3 and ARF4, which direct preciliary vesicle trafficking to mother centriole and ciliogenesis initiation. The protein is ADP-ribosylation factor 4 (ARF4) of Homo sapiens (Human).